Reading from the N-terminus, the 517-residue chain is Acetylcholine receptor subunit gamma (517 aa).

A signal peptide spans 1–22 (MHGGQGPLLLLLLLAVCLGAQG). The Extracellular segment spans residues 23-240 (RNQEERLLAD…VVFYLLIQRK (218 aa)). Residues Asn52 and Asn163 are each glycosylated (N-linked (GlcNAc...) asparagine). An intrachain disulfide couples Cys150 to Cys164. 3 helical membrane passes run 241-265 (PLFY…IHFL), 275-293 (TVAI…LVAK), and 309-330 (LTFL…LNVS). Residues 331–474 (LRSPHTHSMA…WFLVGRVLDR (144 aa)) are Cytoplasmic-facing. Residues 475 to 495 (VCFLAMLSLFICGTAGIFLMA) traverse the membrane as a helical segment.

This sequence belongs to the ligand-gated ion channel (TC 1.A.9) family. Acetylcholine receptor (TC 1.A.9.1) subfamily. Gamma/CHRNG sub-subfamily. As to quaternary structure, pentamer of two alpha chains, and one each of the beta, delta, and gamma (in immature muscle) or epsilon (in mature muscle) chains.

It localises to the postsynaptic cell membrane. The protein localises to the cell membrane. It catalyses the reaction K(+)(in) = K(+)(out). The catalysed reaction is Na(+)(in) = Na(+)(out). In terms of biological role, after binding acetylcholine, the AChR responds by an extensive change in conformation that affects all subunits and leads to opening of an ion-conducting channel across the plasma membrane. The protein is Acetylcholine receptor subunit gamma of Homo sapiens (Human).